We begin with the raw amino-acid sequence, 248 residues long: Probable septum site-determining protein MinC (248 aa).

The disordered stretch occupies residues 94-125 (GMPPAMRGGQPAADFEAPAGEPQANPGAPEPQ).

It belongs to the MinC family. In terms of assembly, interacts with MinD and FtsZ.

Functionally, cell division inhibitor that blocks the formation of polar Z ring septums. Rapidly oscillates between the poles of the cell to destabilize FtsZ filaments that have formed before they mature into polar Z rings. Prevents FtsZ polymerization. The polypeptide is Probable septum site-determining protein MinC (Brucella abortus (strain S19)).